A 471-amino-acid chain; its full sequence is Heparan-sulfate 6-O-sulfotransferase 3 (471 aa).

The Cytoplasmic segment spans residues 1-4 (MDER). The chain crosses the membrane as a helical; Signal-anchor for type II membrane protein span at residues 5 to 27 (FNKWLLTPVLTLLFVVIMYQYVS). Residues 28–471 (PSCTSSCTNF…EDYNSQVVRW (444 aa)) lie on the Lumenal side of the membrane. The interval 39-122 (EQPRAGEAGP…EAPENGSLPR (84 aa)) is disordered. Residues 41–62 (PRAGEAGPPAVPGPARRAQAPP) are compositionally biased toward low complexity. Over residues 70 to 81 (QLPPPPRGPPEG) the composition is skewed to pro residues. The segment covering 88–114 (PEEEDEEPGDPREGEEEEEEDEPDPEA) has biased composition (acidic residues). Residues Asn-117 and Asn-128 are each glycosylated (N-linked (GlcNAc...) asparagine). 152-160 (HIQKTGGTT) contacts 3'-phosphoadenylyl sulfate. Substrate is bound by residues 182–183 (KK), Arg-199, Trp-204, and His-209. The active-site Proton acceptor is the His-209. An N-linked (GlcNAc...) asparagine glycan is attached at Asn-231. 3'-phosphoadenylyl sulfate is bound by residues Arg-245 and Ser-253. Substrate-binding residues include His-257 and Trp-264. N-linked (GlcNAc...) asparagine glycans are attached at residues Asn-324 and Asn-329. 377-379 (TQF) contributes to the 3'-phosphoadenylyl sulfate binding site. Asn-380 carries an N-linked (GlcNAc...) asparagine glycan. Residue 383–384 (RA) coordinates 3'-phosphoadenylyl sulfate. The tract at residues 422–471 (TKQLEHQRDRQKRREERRLQREHRDHQWPKEDGAAEGTVTEDYNSQVVRW) is disordered. The span at 423–454 (KQLEHQRDRQKRREERRLQREHRDHQWPKEDG) shows a compositional bias: basic and acidic residues. The segment covering 462-471 (EDYNSQVVRW) has biased composition (polar residues).

The protein belongs to the sulfotransferase 6 family.

Its subcellular location is the membrane. It catalyses the reaction alpha-D-glucosaminyl-[heparan sulfate](n) + 3'-phosphoadenylyl sulfate = 6-sulfo-alpha-D-glucosaminyl-[heparan sulfate](n) + adenosine 3',5'-bisphosphate + H(+). Its function is as follows. 6-O-sulfation enzyme which catalyzes the transfer of sulfate from 3'-phosphoadenosine 5'-phosphosulfate (PAPS) to position 6 of the N-sulfoglucosamine residue (GlcNS) of heparan sulfate. This chain is Heparan-sulfate 6-O-sulfotransferase 3 (HS6ST3), found in Homo sapiens (Human).